Here is a 526-residue protein sequence, read N- to C-terminus: MAASGSATAGGHWFSALALGVTLLKCLLIPTYHSTDFEVHRNWLAITHSLPISQWYYEATSEWTLDYPPFFAWFEYALSHIAKYFDQEMLNIHNLNYYSSRTLLFQRFSVILTDALFVYAVHECCKCIDGKRTGKDLTEKPKFILSVLLLWNFGLLIVDHIHFQYNGFLSGLLLLSIARLFQKRHIEGALLFAVLLHLKHIYLYVAPAYGVYLLRSYCFTASKPDGSVRWSSFSVVRVTSLGLIVFLVSALSLGPFLALNQLPQVFSRLFPFKRGLCHAYWAPNFWALYNALDKVLSVIGLKLKLLDPSQIPRASMTSGLVQQFQHTVLPSVSPLATLICTLIAILPSVFCLWFKPQGPRGFLRCLVLCALSSFMFGWHVHEKAILLAILPMSLLSVEKAGDATVFLILATTGHYSLFPLLFTAPELPIKILLMLLFTVYSISSLKTLFRKEKPLFNWMETVYLLGLGPLEVCCEFLLPFTSWKLKYPFIPLLLTSVYCAVGITYAWTRLYASVLTGSLVSKTKKH.

The next 11 helical transmembrane spans lie at 9–29, 108–128, 143–163, 188–208, 238–258, 334–354, 361–380, 400–422, 427–449, 461–481, and 487–507; these read AGGH…CLLI, FSVI…CKCI, FILS…HIHF, GALL…VAPA, VTSL…PFLA, PLAT…CLWF, GFLR…GWHV, AGDA…PLLF, LPIK…KTLF, TVYL…LPFT, and YPFI…TYAW.

Belongs to the ALG6/ALG8 glucosyltransferase family.

The protein localises to the endoplasmic reticulum membrane. It catalyses the reaction an alpha-D-Glc-(1-&gt;3)-alpha-D-Man-(1-&gt;2)-alpha-D-Man-(1-&gt;2)-alpha-D-Man-(1-&gt;3)-[alpha-D-Man-(1-&gt;2)-alpha-D-Man-(1-&gt;3)-[alpha-D-Man-(1-&gt;2)-alpha-D-Man-(1-&gt;6)]-alpha-D-Man-(1-&gt;6)]-beta-D-Man-(1-&gt;4)-beta-D-GlcNAc-(1-&gt;4)-alpha-D-GlcNAc-diphospho-di-trans,poly-cis-dolichol + a di-trans,poly-cis-dolichyl beta-D-glucosyl phosphate = an alpha-D-Glc-(1-&gt;3)-alpha-D-Glc-(1-&gt;3)-alpha-D-Man-(1-&gt;2)-alpha-D-Man-(1-&gt;2)-alpha-D-Man-(1-&gt;3)-[alpha-D-Man-(1-&gt;2)-alpha-D-Man-(1-&gt;3)-[alpha-D-Man-(1-&gt;2)-alpha-D-Man-(1-&gt;6)]-alpha-D-Man-(1-&gt;6)]-beta-D-Man-(1-&gt;4)-beta-D-GlcNAc-(1-&gt;4)-alpha-D-GlcNAc-diphospho-di-trans,poly-cis-dolichol + a di-trans,poly-cis-dolichyl phosphate + H(+). It functions in the pathway protein modification; protein glycosylation. Its function is as follows. Dolichyl pyrophosphate Glc1Man9GlcNAc2 alpha-1,3-glucosyltransferase that operates in the biosynthetic pathway of dolichol-linked oligosaccharides, the glycan precursors employed in protein asparagine (N)-glycosylation. The assembly of dolichol-linked oligosaccharides begins on the cytosolic side of the endoplasmic reticulum membrane and finishes in its lumen. The sequential addition of sugars to dolichol pyrophosphate produces dolichol-linked oligosaccharides containing fourteen sugars, including two GlcNAcs, nine mannoses and three glucoses. Once assembled, the oligosaccharide is transferred from the lipid to nascent proteins by oligosaccharyltransferases. In the lumen of the endoplasmic reticulum, adds the second glucose residue from dolichyl phosphate glucose (Dol-P-Glc) onto the lipid-linked oligosaccharide intermediate Glc(1)Man(9)GlcNAc(2)-PP-Dol to produce Glc(2)Man(9)GlcNAc(2)-PP-Dol. Glc(2)Man(9)GlcNAc(2)-PP-Dol is a substrate for ALG10, the following enzyme in the biosynthetic pathway. Required for PKD1/Polycystin-1 maturation and localization to the plasma membrane of the primary cilia. The protein is Dolichyl pyrophosphate Glc1Man9GlcNAc2 alpha-1,3-glucosyltransferase of Mus musculus (Mouse).